Consider the following 609-residue polypeptide: Grainyhead-like protein 1 homolog (609 aa).

Residues 1–91 (MTQDYDNKRP…EHDHADHEHS (91 aa)) form a transcription activation region. The tract at residues 183-207 (SDHFTSNNQPPNSQRRTPDSTFSET) is disordered. The segment covering 185-206 (HFTSNNQPPNSQRRTPDSTFSE) has biased composition (polar residues). The region spanning 239–465 (AGNNFEYTLE…DLDTQPVLFI (227 aa)) is the Grh/CP2 DB domain. Interaction with DNA regions lie at residues 371–380 (TDFSSQKGVK) and 418–421 (RKIR).

Belongs to the grh/CP2 family. Grainyhead subfamily. As to quaternary structure, binds DNA as homodimer.

It localises to the nucleus. Transcription factor involved in epithelial development. Binds directly to the consensus DNA sequence 5'-AACCGGTT-3' and modulates expression of epidermal-specific genes, including XK81A1. Important regulator of DSG1 in the context of epidermal differentiation. Regulates the maintenance of skin barrier. No genetic interaction with GRHL3, nor functional cooperativity due to diverse target gene selectivity during epithelia development. Functions downstream of BMP-signaling cascade modulating endogenous bmp4-responsive targets. This Xenopus laevis (African clawed frog) protein is Grainyhead-like protein 1 homolog.